The primary structure comprises 123 residues: Small ribosomal subunit protein uS12cz/uS12cy (123 aa).

This sequence belongs to the universal ribosomal protein uS12 family. As to quaternary structure, part of the 30S ribosomal subunit.

The protein resides in the plastid. The protein localises to the chloroplast. Its function is as follows. With S4 and S5 plays an important role in translational accuracy. Located at the interface of the 30S and 50S subunits. This Arabis hirsuta (Hairy rock-cress) protein is Small ribosomal subunit protein uS12cz/uS12cy (rps12-A).